Reading from the N-terminus, the 642-residue chain is LIM domain kinase 2 (642 aa).

2 consecutive LIM zinc-binding domains span residues 12-63 (CLGC…CHKD) and 72-124 (CHGC…CGKC). Residues 152–239 (LISMPAATDG…TLQLLIEHDP (88 aa)) form the PDZ domain. Residues 282-304 (RSLRRSNSISKSPGPSSPKEPLL) are disordered. Positions 286-304 (RSNSISKSPGPSSPKEPLL) are enriched in low complexity. Residues 331–608 (LIHGEVLGKG…DSFEALSLYL (278 aa)) enclose the Protein kinase domain. ATP contacts are provided by residues 337-345 (LGKGFFGQA) and Lys360. The active site involves Asp451. Thr505 carries the post-translational modification Phosphothreonine.

It belongs to the protein kinase superfamily. TKL Ser/Thr protein kinase family. In terms of assembly, binds ROCK1 and LKAP. Expressed predominantly in the lung, and faintly in the kidney, liver, brain, spleen, gizzard, and intestine.

It is found in the cytoplasm. The protein resides in the cytoskeleton. The protein localises to the spindle. It localises to the microtubule organizing center. Its subcellular location is the centrosome. The catalysed reaction is L-seryl-[protein] + ATP = O-phospho-L-seryl-[protein] + ADP + H(+). It carries out the reaction L-threonyl-[protein] + ATP = O-phospho-L-threonyl-[protein] + ADP + H(+). Serine/threonine-protein kinase that plays an essential role in the regulation of actin filament dynamics. Acts downstream of several Rho family GTPase signal transduction pathways. Involved in astral microtubule organization and mitotic spindle orientation during early stages of mitosis by mediating phosphorylation of TPPP. The protein is LIM domain kinase 2 (LIMK2) of Gallus gallus (Chicken).